The following is a 232-amino-acid chain: Putative N-acetylmannosamine-6-phosphate 2-epimerase (232 aa).

It belongs to the NanE family.

It carries out the reaction an N-acyl-D-glucosamine 6-phosphate = an N-acyl-D-mannosamine 6-phosphate. Its pathway is amino-sugar metabolism; N-acetylneuraminate degradation; D-fructose 6-phosphate from N-acetylneuraminate: step 3/5. In terms of biological role, converts N-acetylmannosamine-6-phosphate (ManNAc-6-P) to N-acetylglucosamine-6-phosphate (GlcNAc-6-P). This is Putative N-acetylmannosamine-6-phosphate 2-epimerase from Corynebacterium glutamicum (strain R).